We begin with the raw amino-acid sequence, 407 residues long: Na(+)-translocating NADH-quinone reductase subunit F (407 aa).

A helical membrane pass occupies residues 4–24 (IILGVFFFTAIVVALVFVILG). In terms of domain architecture, 2Fe-2S ferredoxin-type spans 33–125 (GNVEVLINGE…NMKIHVHEEV (93 aa)). The [2Fe-2S] cluster site is built by Cys-68, Cys-74, Cys-77, and Cys-109. An FAD-binding FR-type domain is found at 128–269 (VKKWECTVRS…SGPFGEFFAR (142 aa)).

This sequence belongs to the NqrF family. Composed of six subunits; NqrA, NqrB, NqrC, NqrD, NqrE and NqrF. The cofactor is [2Fe-2S] cluster. It depends on FAD as a cofactor.

The protein localises to the cell inner membrane. The catalysed reaction is a ubiquinone + n Na(+)(in) + NADH + H(+) = a ubiquinol + n Na(+)(out) + NAD(+). Functionally, NQR complex catalyzes the reduction of ubiquinone-1 to ubiquinol by two successive reactions, coupled with the transport of Na(+) ions from the cytoplasm to the periplasm. The first step is catalyzed by NqrF, which accepts electrons from NADH and reduces ubiquinone-1 to ubisemiquinone by a one-electron transfer pathway. In Methylococcus capsulatus (strain ATCC 33009 / NCIMB 11132 / Bath), this protein is Na(+)-translocating NADH-quinone reductase subunit F.